A 418-amino-acid polypeptide reads, in one-letter code: Tyrosine--tRNA ligase (418 aa).

L-tyrosine is bound at residue Tyr-34. The short motif at 39-48 is the 'HIGH' region element; sequence PTADSLHLGH. Residues Tyr-169 and Gln-173 each contribute to the L-tyrosine site. Positions 229–233 match the 'KMSKS' region motif; the sequence is KFGKS. An ATP-binding site is contributed by Lys-232. The S4 RNA-binding domain occupies 352–418; sequence LNLVDMLVTA…GKKKYAVLTY (67 aa).

It belongs to the class-I aminoacyl-tRNA synthetase family. TyrS type 1 subfamily. Homodimer.

It localises to the cytoplasm. The catalysed reaction is tRNA(Tyr) + L-tyrosine + ATP = L-tyrosyl-tRNA(Tyr) + AMP + diphosphate + H(+). Catalyzes the attachment of tyrosine to tRNA(Tyr) in a two-step reaction: tyrosine is first activated by ATP to form Tyr-AMP and then transferred to the acceptor end of tRNA(Tyr). This chain is Tyrosine--tRNA ligase, found in Streptococcus pyogenes serotype M18 (strain MGAS8232).